A 183-amino-acid polypeptide reads, in one-letter code: Photosystem I assembly protein Ycf4 (183 aa).

The next 2 helical transmembrane spans lie at 21–43 (YIWGSLMCLGGLGFLTIGISSYL) and 63–85 (LVMCFYGVLGFLLGVYIWLLILW).

Belongs to the Ycf4 family.

The protein localises to the plastid. It is found in the chloroplast thylakoid membrane. Functionally, seems to be required for the assembly of the photosystem I complex. This is Photosystem I assembly protein Ycf4 from Chlorella vulgaris (Green alga).